The sequence spans 768 residues: Mitochondrial 15S rRNA processing factor CCM1 (768 aa).

The transit peptide at 1 to 90 (MIRLIRWNNV…RSFTKVIAQH (90 aa)) directs the protein to the mitochondrion. Disordered stretches follow at residues 28–65 (NKRK…NTGS) and 90–114 (HLKP…LPPI). The span at 43 to 53 (NRKDGDIEPYR) shows a compositional bias: basic and acidic residues. Over residues 55–65 (TDQNQTPNTGS) the composition is skewed to polar residues. PPR repeat units lie at residues 274–308 (KIDH…NIEI), 309–344 (SKMI…SQKT), 347–381 (DEKV…GMNV), 382–417 (NQNL…GWVP), and 418–452 (NLQT…NSVT). Residues 583 to 596 (IEPRQDEPTEKATT) are compositionally biased toward basic and acidic residues. A disordered region spans residues 583-609 (IEPRQDEPTEKATTTEEQNASSETDNN). Positions 597-609 (TEEQNASSETDNN) are enriched in polar residues. The stretch at 634–664 (DSYLYNLAIKAAGKFKNYGFAQEILHERGQF) is one PPR 6 repeat.

This sequence belongs to the CCM1 family. In terms of assembly, binds to mitochondrial small subunit 15S rRNA.

The protein resides in the mitochondrion. Functionally, regulates mitochondrial small subunit maturation by controlling 15S rRNA 5'-end processing. Localizes to the 5' precursor of the 15S rRNA in a position that is subsequently occupied by mS47 in the mature yeast mtSSU. Uses structure and sequence-specific RNA recognition, binding to a single-stranded region of the precursor and specifically recognizing bases -6 to -1. The exchange of Ccm1 for mS47 is coupled to the irreversible removal of precursor rRNA that is accompanied by conformational changes of the mitoribosomal proteins uS5m and mS26. These conformational changes signal completion of 5'-end rRNA processing through protection of the mature 5'-end of the 15S rRNA and stabilization of mS47. The removal of the 5' precursor together with the dissociation of Ccm1 may be catalyzed by the 5'-3' exoribonuclease Pet127. Involved in the specific removal of group I introns in mitochondrial encoded transcripts. This chain is Mitochondrial 15S rRNA processing factor CCM1 (CCM1), found in Candida albicans (strain SC5314 / ATCC MYA-2876) (Yeast).